We begin with the raw amino-acid sequence, 343 residues long: MDDNKRKSLDAALKSLDKTFGKGTILRLGDKEVEQIDSIGTGSVGLDLALGIGGIPKGRIVEIYGPESSGKTTLTLHIIAECQKAGGVCAFIDAEHALDVKYAKNLGVNTDDLYVSQPDFGEQALEIVETIARSGAVDLIVVDSVAALTPKAEIEGDMGDQHVGLQARLMSQALRKLTGIVHKMNTTVIFINQIRIKIGATGYGTPETTTGGNALKFYASVRLDVRKIATLKQNEEPIGNRVKVKVVKNKVAPPFRQAEFDVMFGEGLSREGELIDYGVKLDIVDKSGAWFSYKDKKLGQGRENSKAFLKENPEIADEITKAIQNSMGIEGMISGSEDDEGEE.

65 to 72 (GPESSGKT) is an ATP binding site.

The protein belongs to the RecA family.

The protein localises to the cytoplasm. Its function is as follows. Can catalyze the hydrolysis of ATP in the presence of single-stranded DNA, the ATP-dependent uptake of single-stranded DNA by duplex DNA, and the ATP-dependent hybridization of homologous single-stranded DNAs. It interacts with LexA causing its activation and leading to its autocatalytic cleavage. This Campylobacter jejuni subsp. doylei (strain ATCC BAA-1458 / RM4099 / 269.97) protein is Protein RecA.